Consider the following 100-residue polypeptide: Urease subunit gamma (100 aa).

The protein belongs to the urease gamma subunit family. In terms of assembly, heterotrimer of UreA (gamma), UreB (beta) and UreC (alpha) subunits. Three heterotrimers associate to form the active enzyme.

Its subcellular location is the cytoplasm. It carries out the reaction urea + 2 H2O + H(+) = hydrogencarbonate + 2 NH4(+). The protein operates within nitrogen metabolism; urea degradation; CO(2) and NH(3) from urea (urease route): step 1/1. This is Urease subunit gamma from Acinetobacter baylyi (strain ATCC 33305 / BD413 / ADP1).